The chain runs to 94 residues: ESAT-6-like protein EsxN (94 aa).

This sequence belongs to the WXG100 family. ESAT-6 subfamily.

It localises to the secreted. The chain is ESAT-6-like protein EsxN from Mycobacterium bovis (strain ATCC BAA-935 / AF2122/97).